The following is a 248-amino-acid chain: N-acylneuraminate-9-phosphatase (248 aa).

Residue D12 coordinates Mg(2+). Phosphate-binding residues include L13, D14, T131, N132, and K164. D14 contacts Mg(2+). D189 contacts Mg(2+).

It belongs to the HAD-like hydrolase superfamily. NANP family. Requires Mg(2+) as cofactor.

It carries out the reaction N-acetylneuraminate 9-phosphate + H2O = N-acetylneuraminate + phosphate. The enzyme catalyses N-glycoloylneuraminate 9-phosphate + H2O = N-glycoloylneuraminate + phosphate. Its pathway is amino-sugar metabolism; N-acetylneuraminate biosynthesis. Its activity is regulated as follows. Inhibited by calcium. Inhibited by vanadate, sodium orthovanadate and phosphonate. Functionally, catalyzes the dephosphorylation of N-acylneuraminate 9-phosphate (Neu5Ac-9-P) to N-acetylneuraminic acid (Neu5Ac or sialic acid). Can also use N-glycoloylneuraminate 9-phosphate as substrate. The polypeptide is N-acylneuraminate-9-phosphatase (Homo sapiens (Human)).